We begin with the raw amino-acid sequence, 861 residues long: E3 ubiquitin-protein ligase HECTD3 (861 aa).

Alanine 2 bears the N-acetylalanine mark. Position 12 is a phosphoserine (serine 12). Residues 219–397 (DEDLIHFLYD…ASLVRYPRLE (179 aa)) form the DOC domain. In terms of domain architecture, HECT spans 512-857 (YEKPLDYRWP…NCVAIDTDMS (346 aa)). Residue cysteine 823 is the Glycyl thioester intermediate of the active site.

As to quaternary structure, interacts with TRIOBP. Interacts with STX8.

It localises to the cytoplasm. Its subcellular location is the perinuclear region. The catalysed reaction is S-ubiquitinyl-[E2 ubiquitin-conjugating enzyme]-L-cysteine + [acceptor protein]-L-lysine = [E2 ubiquitin-conjugating enzyme]-L-cysteine + N(6)-ubiquitinyl-[acceptor protein]-L-lysine.. Its pathway is protein modification; protein ubiquitination. E3 ubiquitin ligases accepts ubiquitin from an E2 ubiquitin-conjugating enzyme in the form of a thioester and then directly transfers the ubiquitin to targeted substrates. Mediates ubiquitination of TRIOBP and its subsequent proteasomal degradation, thus facilitating cell cycle progression by regulating the turn-over of TRIOBP. Also mediates ubiquitination of STX8. This chain is E3 ubiquitin-protein ligase HECTD3 (Hectd3), found in Mus musculus (Mouse).